The chain runs to 678 residues: DNA ligase (678 aa).

Residues 47 to 51 (DSDYD), 96 to 97 (SL), and Glu-122 each bind NAD(+). Lys-124 (N6-AMP-lysine intermediate) is an active-site residue. Arg-145, Glu-182, Lys-300, and Lys-324 together coordinate NAD(+). Residues Cys-418, Cys-421, Cys-436, and Cys-442 each contribute to the Zn(2+) site. The 77-residue stretch at 602–678 (AYNESFTGKT…ILEDNLKDLL (77 aa)) folds into the BRCT domain.

This sequence belongs to the NAD-dependent DNA ligase family. LigA subfamily. Mg(2+) is required as a cofactor. Requires Mn(2+) as cofactor.

The catalysed reaction is NAD(+) + (deoxyribonucleotide)n-3'-hydroxyl + 5'-phospho-(deoxyribonucleotide)m = (deoxyribonucleotide)n+m + AMP + beta-nicotinamide D-nucleotide.. In terms of biological role, DNA ligase that catalyzes the formation of phosphodiester linkages between 5'-phosphoryl and 3'-hydroxyl groups in double-stranded DNA using NAD as a coenzyme and as the energy source for the reaction. It is essential for DNA replication and repair of damaged DNA. This Francisella tularensis subsp. holarctica (strain LVS) protein is DNA ligase.